A 131-amino-acid chain; its full sequence is Small ribosomal subunit protein uS8 (131 aa).

It belongs to the universal ribosomal protein uS8 family. In terms of assembly, part of the 30S ribosomal subunit. Contacts proteins S5 and S12.

In terms of biological role, one of the primary rRNA binding proteins, it binds directly to 16S rRNA central domain where it helps coordinate assembly of the platform of the 30S subunit. The sequence is that of Small ribosomal subunit protein uS8 from Ruthia magnifica subsp. Calyptogena magnifica.